Consider the following 219-residue polypeptide: 7-cyano-7-deazaguanine synthase (219 aa).

An ATP-binding site is contributed by 10-20 (FSGGQDSTTCL). 4 residues coordinate Zn(2+): Cys-187, Cys-196, Cys-199, and Cys-202.

It belongs to the QueC family. Homodimer. Zn(2+) serves as cofactor.

It catalyses the reaction 7-carboxy-7-deazaguanine + NH4(+) + ATP = 7-cyano-7-deazaguanine + ADP + phosphate + H2O + H(+). Its pathway is purine metabolism; 7-cyano-7-deazaguanine biosynthesis. In terms of biological role, catalyzes the ATP-dependent conversion of 7-carboxy-7-deazaguanine (CDG) to 7-cyano-7-deazaguanine (preQ(0)). In Lysinibacillus sphaericus (strain C3-41), this protein is 7-cyano-7-deazaguanine synthase.